We begin with the raw amino-acid sequence, 184 residues long: Ribosome maturation factor RimM (184 aa).

A PRC barrel domain is found at Glu-105–Phe-184.

Belongs to the RimM family. Binds ribosomal protein uS19.

Its subcellular location is the cytoplasm. Its function is as follows. An accessory protein needed during the final step in the assembly of 30S ribosomal subunit, possibly for assembly of the head region. Essential for efficient processing of 16S rRNA. May be needed both before and after RbfA during the maturation of 16S rRNA. It has affinity for free ribosomal 30S subunits but not for 70S ribosomes. This Vibrio cholerae serotype O1 (strain ATCC 39541 / Classical Ogawa 395 / O395) protein is Ribosome maturation factor RimM.